Here is a 121-residue protein sequence, read N- to C-terminus: Basic phospholipase A2 VRV-PL-V (121 aa).

7 disulfide bridges follow: Cys-26–Cys-115, Cys-28–Cys-44, Cys-43–Cys-95, Cys-49–Cys-121, Cys-50–Cys-88, Cys-57–Cys-81, and Cys-75–Cys-86. Ca(2+)-binding residues include Tyr-27, Gly-29, and Gly-31. His-47 is a catalytic residue. Asp-48 serves as a coordination point for Ca(2+). Asp-89 is an active-site residue.

This sequence belongs to the phospholipase A2 family. Group II subfamily. D49 sub-subfamily. Monomer. The cofactor is Ca(2+). In terms of tissue distribution, expressed by the venom gland.

Its subcellular location is the secreted. The enzyme catalyses a 1,2-diacyl-sn-glycero-3-phosphocholine + H2O = a 1-acyl-sn-glycero-3-phosphocholine + a fatty acid + H(+). Snake venom phospholipase A2 (PLA2) that has a low enzymatic activity. PLA2 catalyzes the calcium-dependent hydrolysis of the 2-acyl groups in 3-sn-phosphoglycerides. The polypeptide is Basic phospholipase A2 VRV-PL-V (Daboia russelii (Russel's viper)).